A 262-amino-acid polypeptide reads, in one-letter code: Acyl-[acyl-carrier-protein]--UDP-N-acetylglucosamine O-acyltransferase (262 aa).

The protein belongs to the transferase hexapeptide repeat family. LpxA subfamily. As to quaternary structure, homotrimer.

Its subcellular location is the cytoplasm. The catalysed reaction is a (3R)-hydroxyacyl-[ACP] + UDP-N-acetyl-alpha-D-glucosamine = a UDP-3-O-[(3R)-3-hydroxyacyl]-N-acetyl-alpha-D-glucosamine + holo-[ACP]. It participates in glycolipid biosynthesis; lipid IV(A) biosynthesis; lipid IV(A) from (3R)-3-hydroxytetradecanoyl-[acyl-carrier-protein] and UDP-N-acetyl-alpha-D-glucosamine: step 1/6. Its function is as follows. Involved in the biosynthesis of lipid A, a phosphorylated glycolipid that anchors the lipopolysaccharide to the outer membrane of the cell. The polypeptide is Acyl-[acyl-carrier-protein]--UDP-N-acetylglucosamine O-acyltransferase (Verminephrobacter eiseniae (strain EF01-2)).